The sequence spans 380 residues: Cytosolic acyl coenzyme A thioester hydrolase (380 aa).

Positions 50-168 (PCGACITGRI…TLWYVPLSLK (119 aa)) constitute a HotDog ACOT-type 1 domain. The active site involves asparagine 66. Lysine 168 and lysine 198 each carry N6-acetyllysine. Positions 224–338 (SYSQSSLIHL…FFTYVSLSQE (115 aa)) constitute a HotDog ACOT-type 2 domain. Aspartate 255 is a catalytic residue. Lysine 283 carries the post-translational modification N6-acetyllysine. The disordered stretch occupies residues 350–380 (ETEDEKKRFEEGKGRYLQMKAKRQGHAEPQP). Residues 353-363 (DEKKRFEEGKG) show a composition bias toward basic and acidic residues.

In terms of assembly, homohexamer. As to expression, isoform 4 is expressed exclusively in brain.

The protein resides in the cytoplasm. The protein localises to the cytosol. Its subcellular location is the mitochondrion. It carries out the reaction hexadecanoyl-CoA + H2O = hexadecanoate + CoA + H(+). The enzyme catalyses octanoyl-CoA + H2O = octanoate + CoA + H(+). It catalyses the reaction dodecanoyl-CoA + H2O = dodecanoate + CoA + H(+). The catalysed reaction is (9Z)-octadecenoyl-CoA + H2O = (9Z)-octadecenoate + CoA + H(+). It carries out the reaction tetradecanoyl-CoA + H2O = tetradecanoate + CoA + H(+). The enzyme catalyses decanoyl-CoA + H2O = decanoate + CoA + H(+). It catalyses the reaction octadecanoyl-CoA + H2O = octadecanoate + CoA + H(+). It participates in lipid metabolism; fatty acid metabolism. Functionally, catalyzes the hydrolysis of acyl-CoAs into free fatty acids and coenzyme A (CoASH), regulating their respective intracellular levels. Preferentially hydrolyzes palmitoyl-CoA, but has a broad specificity acting on other fatty acyl-CoAs with chain-lengths of C8-C18. May play an important physiological function in brain. This is Cytosolic acyl coenzyme A thioester hydrolase (ACOT7) from Homo sapiens (Human).